The primary structure comprises 193 residues: MKVKNTIAATSFAAAGLAALAVAVSPPAAAGDLVGPGCAEYAAANPTGPASVQGMSQDPVAVAASNNPELTTLTAALSGQLNPQVNLVDTLNSGQYTVFAPTNAAFSKLPASTIDELKTNSSLLTSILTYHVVAGQTSPANVVGTRQTLQGASVTVTGQGNSLKVGNADVVCGGVSTANATVYMIDSVLMPPA.

The signal sequence occupies residues Met1–Ala30. An FAS1 domain is found at Gln57–Leu189.

Generally found as a monomer; homodimer in culture fluids.

The protein resides in the secreted. This chain is Immunogenic protein MPB70 (mpb70), found in Mycobacterium bovis (strain ATCC BAA-935 / AF2122/97).